The sequence spans 445 residues: Xylose isomerase (445 aa).

Residues H109 and D112 contribute to the active site. Mg(2+) contacts are provided by E240, E276, H279, D304, D315, D317, and D347.

Belongs to the xylose isomerase family. As to quaternary structure, homotetramer. Mg(2+) serves as cofactor.

Its subcellular location is the cytoplasm. The catalysed reaction is alpha-D-xylose = alpha-D-xylulofuranose. The protein is Xylose isomerase of Xanthomonas oryzae pv. oryzae (strain MAFF 311018).